A 145-amino-acid chain; its full sequence is Deoxyuridine 5'-triphosphate nucleotidohydrolase (145 aa).

Residues 63–65 (RSG), asparagine 76, and 80–82 (TID) each bind substrate.

It belongs to the dUTPase family. Requires Mg(2+) as cofactor.

It catalyses the reaction dUTP + H2O = dUMP + diphosphate + H(+). It functions in the pathway pyrimidine metabolism; dUMP biosynthesis; dUMP from dCTP (dUTP route): step 2/2. Its function is as follows. This enzyme is involved in nucleotide metabolism: it produces dUMP, the immediate precursor of thymidine nucleotides and it decreases the intracellular concentration of dUTP so that uracil cannot be incorporated into DNA. The chain is Deoxyuridine 5'-triphosphate nucleotidohydrolase from Chlamydia pneumoniae (Chlamydophila pneumoniae).